Here is a 707-residue protein sequence, read N- to C-terminus: Transcription termination factor Rho (707 aa).

Disordered stretches follow at residues 1–38 (MSDT…RRGT) and 76–321 (QAAG…DEIQ). 2 stretches are compositionally biased toward low complexity: residues 16–31 (AAAP…TGAG) and 76–93 (QAAG…ADTA). The segment covering 107–132 (RTGDEAPAEKAEKAGKADKKADKAAA) has biased composition (basic and acidic residues). The segment covering 153 to 163 (ASAEQAAPADD) has biased composition (low complexity). The segment covering 176 to 188 (DAGSPSATDTTVA) has biased composition (polar residues). Residues 203–213 (QQSQGHQQGQG) are compositionally biased toward low complexity. Basic and acidic residues predominate over residues 215 to 265 (ARSDAEGGDGRRRDRRDRGDRDRGDRGDRGDRGDRGDRGERGRDRRNKGDD). A compositionally biased stretch (basic residues) spans 301–315 (RRGRRGRYRDRRGRR). The 76-residue stretch at 331–406 (LIPVAGILDI…VRLDSVNGMA (76 aa)) folds into the Rho RNA-BD domain. ATP is bound by residues 449–454 (GKGQRG), 461–466 (KTGKTM), and arginine 492.

It belongs to the Rho family. As to quaternary structure, homohexamer. The homohexamer assembles into an open ring structure.

Its function is as follows. Facilitates transcription termination by a mechanism that involves Rho binding to the nascent RNA, activation of Rho's RNA-dependent ATPase activity, and release of the mRNA from the DNA template. This Streptomyces lividans protein is Transcription termination factor Rho.